We begin with the raw amino-acid sequence, 111 residues long: Cystatin (111 aa).

The region spanning 3–103 is the Cystatin domain; sequence GGLSPRDVTD…CRFEVWSRPW (101 aa). The Secondary area of contact motif lies at 47–51; it reads QVVSG. Residues Cys-65 and Cys-81 are joined by a disulfide bond.

Belongs to the cystatin family. As to expression, expressed by the venom gland.

It localises to the secreted. Inhibits various C1 cysteine proteases including cathepsin L, papain and cathepsin B. This protein has no toxic activity and its function in the venom is unknown. It may play a role as housekeeping or regulatory protein. This is Cystatin from Bitis arietans (African puff adder).